The primary structure comprises 233 residues: Adapter protein MecA (233 aa).

This sequence belongs to the MecA family. Homodimer.

Functionally, enables the recognition and targeting of unfolded and aggregated proteins to the ClpC protease or to other proteins involved in proteolysis. The protein is Adapter protein MecA of Lactococcus lactis subsp. lactis (strain IL1403) (Streptococcus lactis).